A 230-amino-acid chain; its full sequence is Urease accessory protein UreF (230 aa).

It belongs to the UreF family. As to quaternary structure, ureD, UreF and UreG form a complex that acts as a GTP-hydrolysis-dependent molecular chaperone, activating the urease apoprotein by helping to assemble the nickel containing metallocenter of UreC. The UreE protein probably delivers the nickel.

The protein localises to the cytoplasm. Required for maturation of urease via the functional incorporation of the urease nickel metallocenter. The polypeptide is Urease accessory protein UreF (Allorhizobium ampelinum (strain ATCC BAA-846 / DSM 112012 / S4) (Agrobacterium vitis (strain S4))).